A 509-amino-acid chain; its full sequence is Maturase K (509 aa).

Belongs to the intron maturase 2 family. MatK subfamily.

Its subcellular location is the plastid. The protein resides in the chloroplast. In terms of biological role, usually encoded in the trnK tRNA gene intron. Probably assists in splicing its own and other chloroplast group II introns. The chain is Maturase K from Pereskia aculeata (Barbados gooseberry).